We begin with the raw amino-acid sequence, 86 residues long: Small ribosomal subunit protein bS16 (86 aa).

It belongs to the bacterial ribosomal protein bS16 family.

The chain is Small ribosomal subunit protein bS16 from Mycoplasmoides gallisepticum (strain R(low / passage 15 / clone 2)) (Mycoplasma gallisepticum).